Consider the following 144-residue polypeptide: Testis-specific protein TSX (144 aa).

Disordered regions lie at residues 1–21 (MSEKQSPKTSEAECSAMDLPE), 69–99 (EDRVSSTDDEDTCQAGCTEDDETSHSDRDID), and 120–144 (FTDQNPQADQDLEETESDGAMNPTD). Residues 75–90 (TDDEDTCQAGCTEDDE) are compositionally biased toward acidic residues.

Testis.

May have an RNA/DNA binding role. The sequence is that of Testis-specific protein TSX (Tsx) from Mus musculus (Mouse).